Consider the following 389-residue polypeptide: Multidrug resistance protein 1 (389 aa).

The next 11 helical transmembrane spans lie at 6 to 26 (ITLTILLTNLFIAFLGIGLVI), 42 to 62 (AVGYMVACFAITQLIVSPIAG), 71 to 91 (KIMIVIGLLFFSVSEFLFGIG), 102 to 122 (MLGGISAAFIMPGVTAFIADI), 134 to 154 (YMSAAISTGFIIGPGIGGFLA), 160 to 180 (LPFFFAAAFALLAAILSILTL), 202 to 222 (IFAPMYFIAFLIILISSFGLA), 243 to 263 (IAIMITGGAIVGAITQVVLFD), 286 to 306 (VFLLTTVHSYVAILLVTVTVF), 336 to 356 (SMFTSIGNVFGPIIGGMLFDI), and 358 to 378 (VNYPFYFATVTLAIGIALTIA).

The protein belongs to the major facilitator superfamily. TCR/Tet family.

The protein resides in the cell membrane. In terms of biological role, energy-dependent efflux pump responsible for decreased drug accumulation in multi-drug-resistant cells. Probably uses a transmembrane proton gradient as the energy source. Causes the efflux of a variety of toxic substances, including such structurally diverse compounds as ethidium bromide, rhodamine and acridine dyes, tetraphenylphosphonium, puromycin, chloramphenicol, doxorubicin, and fluoroquinolone antibiotics. This is Multidrug resistance protein 1 (bmr) from Bacillus subtilis (strain 168).